The sequence spans 175 residues: Adenine phosphoribosyltransferase (175 aa).

Belongs to the purine/pyrimidine phosphoribosyltransferase family. As to quaternary structure, homodimer.

The protein resides in the cytoplasm. The enzyme catalyses AMP + diphosphate = 5-phospho-alpha-D-ribose 1-diphosphate + adenine. The protein operates within purine metabolism; AMP biosynthesis via salvage pathway; AMP from adenine: step 1/1. In terms of biological role, catalyzes a salvage reaction resulting in the formation of AMP, that is energically less costly than de novo synthesis. The chain is Adenine phosphoribosyltransferase from Oenococcus oeni (strain ATCC BAA-331 / PSU-1).